The following is a 100-amino-acid chain: uncharacterized protein (100 aa).

The protein localises to the secreted. This is an uncharacterized protein from Mycobacterium leprae (strain TN).